A 444-amino-acid chain; its full sequence is uncharacterized protein (444 aa).

12 consecutive transmembrane segments (helical) span residues 2 to 22, 24 to 44, 52 to 72, 106 to 126, 134 to 154, 174 to 194, 228 to 248, 261 to 281, 305 to 325, 343 to 363, 377 to 397, and 424 to 444; these read PILIVAVGVLILLFLIIKVKL, TFVSLIVVSFLVAIGLGMDIN, TGIGGQLGHLALVFGLGAMLG, FIIGIALFFEVGLVLLIPIVY, MPFLYLGIPMAAALNVTHGFL, VLLFGIIIAVPTTVIAGPLFN, FAISAVTSLFPVIFMAMATIF, IIEFIGTPGTAMLISLLLALY, IAMMLLIIGGGGAFKQVLIDG, LFVAWTIAAVLRLCLGSATVA, AGSVNPALMVLATGAGSVIAC, and LLTTVLSVTGLGCVLLAGLVM.

It belongs to the GntP permease family.

Its subcellular location is the cell membrane. This is an uncharacterized protein from Bacillus subtilis (strain 168).